Consider the following 524-residue polypeptide: Calcium-dependent protein kinase 1 (524 aa).

The interval 1–34 is disordered; sequence MGCSQSSNVKDFKTRRSKFTNGNNYGKSGNNKNS. Residue Gly-2 is the site of N-myristoyl glycine attachment. A lipid anchor (S-palmitoyl cysteine) is attached at Cys-3. Positions 10–20 match the Basic cluster involved in membrane binding motif; the sequence is KDFKTRRSKFT. Ser-17, Ser-28, and Ser-34 each carry phosphoserine; by autocatalysis. Residues 21–32 are compositionally biased toward low complexity; sequence NGNNYGKSGNNK. The 270-residue stretch at 56-325 folds into the Protein kinase domain; the sequence is YFKVRKLGSG…AKEALNSKWI (270 aa). ATP-binding positions include 62–70 and Lys-85; that span reads LGSGAYGEV. At Ser-64 the chain carries Phosphoserine; by PKG; by autocatalysis. Residue Thr-100 is modified to Phosphothreonine; by autocatalysis. Residue Ser-118 is modified to Phosphoserine; by autocatalysis. Asp-191 (proton acceptor) is an active-site residue. Ser-217 carries the phosphoserine modification. Ser-220 bears the Phosphoserine; by autocatalysis mark. The residue at position 231 (Thr-231) is a Phosphothreonine; by PKG; by autocatalysis. Ser-335 bears the Phosphoserine; by autocatalysis mark. A J domain autoinhibitory motif motif is present at residues 346 to 353; it reads NMRKFEGS. The segment at 346–364 is j domain; sequence NMRKFEGSQKLAQAAILFI. The J domain interacts with the EF-hand domains motif lies at 354–364; that stretch reads QKLAQAAILFI. 4 EF-hand domains span residues 372–407, 416–451, 452–487, and 488–521; these read EERK…LRSF, NVEE…KQIL, FSEE…TSIS, and EQMW…ICDN. Positions 385, 387, 389, 391, 396, 429, 431, 433, 435, 440, 465, 467, 469, 471, 476, 499, 501, 503, 505, and 510 each coordinate Ca(2+).

This sequence belongs to the protein kinase superfamily. Ser/Thr protein kinase family. CDPK subfamily. In terms of assembly, monomer. Forms a high molecular weight (250 and 400 kDa) complex. Forms a complex composed of CDPK1, PKA regulatory subunit PKAr and 14-3-3I; the complex is formed in merozoites in response to low extracellular level of K(+) and may play a role in microneme secretion. Interacts (when phosphorylated) with 14-3-3I in a Ca(2+)-independent manner; the interaction does not regulate CDPK1 catalytic activity but is required for merozoite invasion of host erythrocytes. Interacts with PKA regulatory subunit PKAr; in a Ca(2+)-dependent manner. Interacts with SERA5 p50 in the late schizont stage. Interacts with inner membrane complex protein IMC1g in late schizonts. Interacts with rhoptry protein RhopH3 in merozoites. Mg(2+) serves as cofactor. In terms of processing, myristoylated. Myristoylation, palmitoylation and the basic cluster motif are required for the localization to the parasitophorous vacuole membrane. Post-translationally, palmitoylated. Palmitoylation increases in merozoites in response to low level of extracellular K(+) in the host blood. Myristoylation, palmitoylation and the basic cluster motif are required for the localization to the parasitophorous vacuole membrane. Phosphorylation at Ser-64 occurs at late schizont stage and regulates CDPK1 protein-protein interaction. Phosphorylated at Ser-28, Ser-34 and Ser-64 in merozoites in response to low extracellular level of K(+). Phosphorylation at Thr-231 may regulate CDPK1 kinase activity. Phosphorylation increases in response to an increase in intracellular Ca(2+) levels. Autophosphorylated in vitro. Autophosphorylation does not affect membrane localization in vitro.

Its subcellular location is the membrane. It is found in the cell membrane. It localises to the parasitophorous vacuole membrane. The protein resides in the cytoplasm. The protein localises to the cell projection. Its subcellular location is the cilium. It is found in the flagellum. It localises to the host cell membrane. The catalysed reaction is L-seryl-[protein] + ATP = O-phospho-L-seryl-[protein] + ADP + H(+). The enzyme catalyses L-threonyl-[protein] + ATP = O-phospho-L-threonyl-[protein] + ADP + H(+). Its activity is regulated as follows. Activated by calcium. Upon calcium binding to the EF-hand domains, the C-terminus of the junction domain (J domain) undergoes a conformational change which results in the dissociation of the pseudo-substrate inhibitory motif from the catalytic domain. This, in turn may facilitate the autophosphorylation of the activation loop at Thr-231, which leads to the kinase activation. May be negatively regulated by PKA-mediated phosphorylation. Inhibited by purfalcamine. Its function is as follows. Calcium-dependent protein kinase which acts as a sensor and effector of intracellular Ca(2+) levels probably in part downstream of cGMP-activated PKG kinase. By phosphorylating various proteins, required for microneme secretion and thus merozoite egress from and invasion of host erythrocytes. During gametogenesis, essential for the development of both male and female gametes. Phosphorylates SERA5 p50 which enhances SERA5 p50 protease activity; however, SERA5 p50 protease activity has been shown in other studies to be controversial. Probably by phosphorylating SERA5 p50, plays a role in merozoite egress from host erythrocytes. Probably prior or during merozoite invasion of host erythrocytes, phosphorylates rhoptry protein RhopH3 which is required for RhopH3 localization to rhoptries and for its secretion. Probably in late schizonts, phosphorylates myosin A tail domain-interacting protein MTIP and glideosome-associated protein 45 GAP45, both of which are components of the motor complex that generates the force required by the parasite to invade host cells. In late schizonts, phosphorylates inner membrane complex protein IMC1g. In late schizonts, phosphorylates PKA regulatory subunit PKAr in a calcium-dependent manner, which may contribute to the dissociation of regulatory PKAr and catalytic PKAc subunits and promote the activation of PKAc. May phosphorylate raf kinase inhibitory protein RKIP which in turn may regulate CDPK1 catalytic activity. May phosphorylate proteins of the host erythrocyte membranes. The polypeptide is Calcium-dependent protein kinase 1 (Plasmodium falciparum (isolate 3D7)).